The sequence spans 148 residues: uncharacterized protein (148 aa).

This is an uncharacterized protein from Haemophilus influenzae (strain ATCC 51907 / DSM 11121 / KW20 / Rd).